A 307-amino-acid chain; its full sequence is D-alanine--D-alanine ligase (307 aa).

In terms of domain architecture, ATP-grasp spans lysine 101–glutamate 301. Proline 127–threonine 182 is a binding site for ATP. Mg(2+) contacts are provided by aspartate 251, glutamate 268, and asparagine 270.

This sequence belongs to the D-alanine--D-alanine ligase family. Mg(2+) serves as cofactor. Requires Mn(2+) as cofactor.

Its subcellular location is the cytoplasm. The enzyme catalyses 2 D-alanine + ATP = D-alanyl-D-alanine + ADP + phosphate + H(+). Its pathway is cell wall biogenesis; peptidoglycan biosynthesis. Functionally, cell wall formation. The protein is D-alanine--D-alanine ligase of Methylorubrum extorquens (strain CM4 / NCIMB 13688) (Methylobacterium extorquens).